Consider the following 262-residue polypeptide: ELL-associated factor 2 (262 aa).

The segment at 17-104 (LKLGESFEKQ…TGECRLEKLS (88 aa)) is necessary for interaction with ELL. Over residues 124 to 144 (LEQQQQQMWNPPRTSNLVQHS) the composition is skewed to polar residues. 2 disordered regions span residues 124-154 (LEQQ…SPTS) and 170-232 (MDQM…ADTT). A phosphoserine mark is found at S146, S151, and S154. Over residues 174–192 (SSCDSSSDSRSSSSSSSED) the composition is skewed to low complexity. A necessary for transactivation activity region spans residues 177 to 262 (DSSSDSRSSS…LSESDSDSED (86 aa)). The necessary for interaction with TCEA1 and transactivation activity stretch occupies residues 248–262 (RSDLQLSESDSDSED).

Belongs to the EAF family. In terms of assembly, component of the super elongation complex (SEC), at least composed of EAF1, EAF2, CDK9, MLLT3/AF9, AFF (AFF1 or AFF4), the P-TEFb complex and ELL (ELL, ELL2 or ELL3). Interacts with ELL, ELL2 and TCEA1.

The protein localises to the nucleus speckle. Acts as a transcriptional transactivator of ELL, ELL2 and TCEA1 elongation activities. Potent inducer of apoptosis in prostatic and non-prostatic cell lines. This is ELL-associated factor 2 (Eaf2) from Rattus norvegicus (Rat).